Reading from the N-terminus, the 501-residue chain is Archaemetzincin-1 (501 aa).

Histidine 261 is a binding site for Zn(2+). Glutamate 262 functions as the Proton acceptor in the catalytic mechanism. Residues histidine 265, cysteine 272, cysteine 277, cysteine 296, and cysteine 299 each coordinate Zn(2+). Residues 349–370 (DSGMGCESDTEPVTSPSEPVTP) form a disordered region.

It belongs to the peptidase M54 family. Zn(2+) serves as cofactor.

Its function is as follows. Probable zinc metalloprotease. The protein is Archaemetzincin-1 (Amz1) of Rattus norvegicus (Rat).